Reading from the N-terminus, the 329-residue chain is Ribosomal RNA small subunit methyltransferase C (329 aa).

It belongs to the methyltransferase superfamily. RsmC family. Monomer.

It localises to the cytoplasm. The enzyme catalyses guanosine(1207) in 16S rRNA + S-adenosyl-L-methionine = N(2)-methylguanosine(1207) in 16S rRNA + S-adenosyl-L-homocysteine + H(+). In terms of biological role, specifically methylates the guanine in position 1207 of 16S rRNA in the 30S particle. The sequence is that of Ribosomal RNA small subunit methyltransferase C from Actinobacillus pleuropneumoniae serotype 3 (strain JL03).